The chain runs to 158 residues: MSGAVCPGSFDPVTLGHIDVFERASAQFDEVVVAVLVNPNKKGMFDLDERIAMIEESTTHLPNLRVESGQGLVVDFVKSRGLTAIVKGLRTGTDFEYELQMAQMNKHVAGVDTFFVATTPQYSFVSSSLAKEVASLGGDVSALLPSPVNRRLQEKLNG.

Position 9 (Ser9) interacts with substrate. Residues 9–10 (SF) and His17 each bind ATP. Lys41, Val73, and Lys87 together coordinate substrate. ATP is bound by residues 88–90 (GLR), Glu98, and 122–128 (YSFVSSS).

Belongs to the bacterial CoaD family. Homohexamer. Mg(2+) is required as a cofactor.

The protein resides in the cytoplasm. The catalysed reaction is (R)-4'-phosphopantetheine + ATP + H(+) = 3'-dephospho-CoA + diphosphate. It participates in cofactor biosynthesis; coenzyme A biosynthesis; CoA from (R)-pantothenate: step 4/5. In terms of biological role, reversibly transfers an adenylyl group from ATP to 4'-phosphopantetheine, yielding dephospho-CoA (dPCoA) and pyrophosphate. The protein is Phosphopantetheine adenylyltransferase of Mycolicibacterium smegmatis (strain ATCC 700084 / mc(2)155) (Mycobacterium smegmatis).